Reading from the N-terminus, the 169-residue chain is MSHPALRQLRALSFFDDISTLDSSLLDWLMLEDSMTRRFEGFCERVTVDMLFEGFVGPEALEEEGEFLPDEPRYWLREILLCGDGVPWLVGRTLVPESTLCGPELALQQLGTTPLGRYLFTSSTLTRDFIQPGRSDELWGRRSLLRLSGKPLLLTELFLPASPLYGEEK.

Residues Met-35, Arg-77, Leu-115, and Glu-156 each coordinate substrate.

This sequence belongs to the UbiC family. Monomer.

The protein localises to the cytoplasm. It carries out the reaction chorismate = 4-hydroxybenzoate + pyruvate. Its pathway is cofactor biosynthesis; ubiquinone biosynthesis. Functionally, removes the pyruvyl group from chorismate, with concomitant aromatization of the ring, to provide 4-hydroxybenzoate (4HB) for the ubiquinone pathway. The sequence is that of Chorismate pyruvate-lyase from Cronobacter sakazakii (strain ATCC BAA-894) (Enterobacter sakazakii).